The primary structure comprises 191 residues: Neuronal calcium sensor 1 (191 aa).

Gly-2 carries the N-myristoyl glycine lipid modification. 4 EF-hand domains span residues 24-59 (EAEI…FPFG), 60-95 (DPSK…TSRG), 96-131 (TVEE…IYRM), and 144-179 (TPEK…DPTI). Residues Asp-73, Asn-75, Asp-77, Glu-84, Asp-109, Asp-111, Asp-113, Glu-120, Asp-157, Asn-159, Asp-161, Lys-163, and Glu-168 each coordinate Ca(2+).

The protein belongs to the recoverin family.

Neuronal calcium sensor, regulator of G protein-coupled receptor phosphorylation in a calcium dependent manner. Regulates neurite extension and branching by activity-dependent (Ca2+) influx in growth cones. In Aplysia californica (California sea hare), this protein is Neuronal calcium sensor 1.